The primary structure comprises 376 residues: D-alanine--D-alanine ligase (376 aa).

One can recognise an ATP-grasp domain in the interval Lys155–Asp361. Glu188–Glu243 serves as a coordination point for ATP. Residues Asp314, Glu328, and Asn330 each contribute to the Mg(2+) site.

This sequence belongs to the D-alanine--D-alanine ligase family. Mg(2+) is required as a cofactor. It depends on Mn(2+) as a cofactor.

The protein localises to the cytoplasm. The catalysed reaction is 2 D-alanine + ATP = D-alanyl-D-alanine + ADP + phosphate + H(+). Its pathway is cell wall biogenesis; peptidoglycan biosynthesis. Cell wall formation. This chain is D-alanine--D-alanine ligase, found in Acetivibrio thermocellus (strain ATCC 27405 / DSM 1237 / JCM 9322 / NBRC 103400 / NCIMB 10682 / NRRL B-4536 / VPI 7372) (Clostridium thermocellum).